A 699-amino-acid polypeptide reads, in one-letter code: tRNA(Met) cytidine acetyltransferase TmcA (699 aa).

ATP-binding positions include glutamine 178, 200–209 (GRGKSTLAGM), and arginine 322. An N-acetyltransferase domain is found at 408–547 (MHIASAQVAG…SGCYSAMAIL (140 aa)). Residues 475–477 (IAV) and 482–488 (RRQGIGR) each bind acetyl-CoA.

It belongs to the RNA cytidine acetyltransferase family. TmcA subfamily.

Its subcellular location is the cytoplasm. It catalyses the reaction cytidine(34) in elongator tRNA(Met) + acetyl-CoA + ATP + H2O = N(4)-acetylcytidine(34) in elongator tRNA(Met) + ADP + phosphate + CoA + H(+). In terms of biological role, catalyzes the formation of N(4)-acetylcytidine (ac(4)C) at the wobble position of tRNA(Met), by using acetyl-CoA as an acetyl donor and ATP (or GTP). This chain is tRNA(Met) cytidine acetyltransferase TmcA, found in Pectobacterium atrosepticum (strain SCRI 1043 / ATCC BAA-672) (Erwinia carotovora subsp. atroseptica).